We begin with the raw amino-acid sequence, 202 residues long: MASSTRLTIIQSSFVSARTRLNYVSKTNHSGFACRSLSKPRNLSLSVYSMGSSSSSPKPDNVQEAEKNEFASLSENEWKKRLTPEQYYITRQKGTERAFTGEYWNSKTPGVYNCVCCDTPLFDSSTKFDSGTGWPSYYQPIGNNVKTKLDLSIIFMPRQEVVCAVCNAHLGHVFDDGPRPTGKRYCLNSAALKLNALEKTRD.

The N-terminal 63 residues, 1-63, are a transit peptide targeting the chloroplast; the sequence is MASSTRLTII…SSSPKPDNVQ (63 aa). Residues 48 to 67 are disordered; it reads YSMGSSSSSPKPDNVQEAEK. The MsrB domain maps to 75-197; sequence ENEWKKRLTP…NSAALKLNAL (123 aa). Residues cysteine 114, cysteine 117, cysteine 163, and cysteine 166 each coordinate Zn(2+). Catalysis depends on cysteine 186, which acts as the Nucleophile.

This sequence belongs to the MsrB Met sulfoxide reductase family. Zn(2+) is required as a cofactor. In terms of tissue distribution, expressed at low levels in stems, leaves, floral buds, flowers and siliques (at protein level).

The protein resides in the plastid. It is found in the chloroplast. The catalysed reaction is L-methionyl-[protein] + [thioredoxin]-disulfide + H2O = L-methionyl-(R)-S-oxide-[protein] + [thioredoxin]-dithiol. In terms of biological role, catalyzes the reduction of methionine sulfoxide (MetSO) to methionine in proteins. Specifically reduces the MetSO R-enantiomer. Plays a protective role against oxidative stress by restoring activity to proteins that have been inactivated by methionine oxidation. May play an essential function in association with MSRB2 in maintaining vegetative growth during environmental constraints, through the preservation of photosynthetic antennae. MSRB1 and MSRB2 account for most of the leaf peptide MSR capacity. This Arabidopsis thaliana (Mouse-ear cress) protein is Peptide methionine sulfoxide reductase B1, chloroplastic.